We begin with the raw amino-acid sequence, 461 residues long: tRNA-2-methylthio-N(6)-dimethylallyladenosine synthase (461 aa).

The MTTase N-terminal domain occupies 18–134 (KHIYIQTLGC…LPDFISRIEK (117 aa)). [4Fe-4S] cluster contacts are provided by C27, C63, C97, C172, C176, and C179. Positions 158 to 388 (CNGQVSSFVT…QALQEQHTLE (231 aa)) constitute a Radical SAM core domain. The region spanning 391–454 (KAMEGKQEDV…LHSLRGEMLC (64 aa)) is the TRAM domain.

Belongs to the methylthiotransferase family. MiaB subfamily. As to quaternary structure, monomer. [4Fe-4S] cluster is required as a cofactor.

Its subcellular location is the cytoplasm. The enzyme catalyses N(6)-dimethylallyladenosine(37) in tRNA + (sulfur carrier)-SH + AH2 + 2 S-adenosyl-L-methionine = 2-methylsulfanyl-N(6)-dimethylallyladenosine(37) in tRNA + (sulfur carrier)-H + 5'-deoxyadenosine + L-methionine + A + S-adenosyl-L-homocysteine + 2 H(+). In terms of biological role, catalyzes the methylthiolation of N6-(dimethylallyl)adenosine (i(6)A), leading to the formation of 2-methylthio-N6-(dimethylallyl)adenosine (ms(2)i(6)A) at position 37 in tRNAs that read codons beginning with uridine. The sequence is that of tRNA-2-methylthio-N(6)-dimethylallyladenosine synthase from Syntrophus aciditrophicus (strain SB).